A 204-amino-acid polypeptide reads, in one-letter code: MDRVVLMLSVLSLGVSSQPITDGQRLFSIAVSRVQHLHLLAQRLFSDFESSLQTEEQRQLNKIFLQDFCNSDYIISPIDKHETQRSSVLKLLSISYRLVESWEFPSRSLAGGSAPRNQISPKLSELKTGIHLLIRANEDGAELFPDSSALQLAPYGDYYHSPGTDESLRRTYELLACFKKDMHKVETYLTVAKCRLSPEANCTL.

Residues 1 to 17 (MDRVVLMLSVLSLGVSS) form the signal peptide. Gln-18 carries the post-translational modification Pyrrolidone carboxylic acid. His-36 provides a ligand contact to Zn(2+). Residues Cys-69 and Cys-177 are joined by a disulfide bond. Glu-186 is a Zn(2+) binding site. Cys-194 and Cys-202 are joined by a disulfide.

The protein belongs to the somatotropin/prolactin family.

The protein resides in the secreted. In terms of biological role, growth hormone plays an important role in growth control and is involved in the regulation of several anabolic processes. Implicated as an osmoregulatory substance important for seawater adaptation. This chain is Somatotropin (gh), found in Acanthopagrus butcheri (Australian black bream).